Reading from the N-terminus, the 446-residue chain is Transcription factor Sox-10 (446 aa).

Disordered stretches follow at residues 1-60, 153-191, and 203-264; these read MSDD…SEDE, RLRMQHKKDHPDYKYQPRRRKNGKPSPGEGDGSSEAEGG, and HLDH…IDFG. Residues 36 to 48 show a composition bias toward acidic residues; that stretch reads DDDDDDDEEEEEE. Residue Lys-52 forms a Glycyl lysine isopeptide (Lys-Gly) (interchain with G-Cter in SUMO) linkage. The dimerization (DIM) stretch occupies residues 56–96; the sequence is DSEDERFPVCIREAVSQVLNGYDWTLVPMPVRVNGGSKSKP. A DNA-binding region (HMG box) is located at residues 98–166; sequence VKRPMNAFMV…QHKKDHPDYK (69 aa). A compositionally biased stretch (basic and acidic residues) spans 153–167; that stretch reads RLRMQHKKDHPDYKY. Residues 213-226 are compositionally biased toward polar residues; sequence SDGNSEHSTGQSHG. Residues 217–303 form a transactivation domain (TAM) region; sequence SEHSTGQSHG…NGHAGHPSHI (87 aa). A compositionally biased stretch (basic and acidic residues) spans 243 to 257; that stretch reads SDGKRDGSHALREGG. Residues 337–446 are transactivation domain (TAC); that stretch reads KAQVKTESSS…QPVYTTLSRP (110 aa). Lys-341 participates in a covalent cross-link: Glycyl lysine isopeptide (Lys-Gly) (interchain with G-Cter in SUMO). Positions 421–446 are disordered; the sequence is SDPPSVAQSHSPTHWEQPVYTTLSRP. Over residues 426-446 the composition is skewed to polar residues; it reads VAQSHSPTHWEQPVYTTLSRP.

Interacts with the sumoylation factors ube2i/ubc9 and sumo1. Post-translationally, sumoylated. In terms of tissue distribution, first expressed at stages 13/14 at the lateral edges of the neural plate, in the neural crest forming region. By stage 22, neural crest cells migrate in the cranial region and strong expression is seen in the crest cells that populate the branchial arches as well as those migrating in the frontonasal region. Also strongly expressed in the trunk neural crest. Expression in the otic vesicle begins around stage 25 and persists until at least stage 40. At stage 30, expression is down-regulated in the cranial neural crest of the pharyngeal arches but persists in the trunk neural crest, in the otic vesicle and in discrete domains adjacent to the hindbrain. At stage 40, expression is restricted to the otic vesicle, differentiated pigment cells, and in several cranial ganglia.

The protein resides in the cytoplasm. It localises to the nucleus. In terms of biological role, acts early in neural crest formation, functioning redundantly with the other group E Sox factors sox8 and sox9 to induce neural crest progenitors. Acts downstream of wnt-signaling at the neural plate border. Involved in the specification of neural crest progenitors fated to form the pigment cell lineage. The protein is Transcription factor Sox-10 (sox10) of Xenopus laevis (African clawed frog).